Consider the following 674-residue polypeptide: Sodium/myo-inositol cotransporter 2 (674 aa).

The Extracellular segment spans residues 1-27 (MESSPSSPQPTQSDPLAVFPQRTLEPA). A helical transmembrane segment spans residues 28 to 48 (DIAVLVLYFLFVLAVGLWSTV). The Cytoplasmic segment spans residues 49 to 56 (KTRRDTVK). Residues 57 to 77 (GYFLAGGDMVWWPVGASLFAS) form a helical membrane-spanning segment. The Extracellular portion of the chain corresponds to 78–102 (NVGSGHFVGLAGSGAAAGLSVTAYE). The chain crosses the membrane as a helical span at residues 103–123 (FNGIFSVLMLAWIFLPIYIAG). Residues 124–140 (QVTTMPEYLRKRFGGSR) lie on the Cytoplasmic side of the membrane. The chain crosses the membrane as a helical span at residues 141–161 (IPITLAVLYLFIYIFTKISVD). Residues 162–180 (MYAGAIFIQQSLHLNLYLA) are Extracellular-facing. Residues 181–201 (IVGLLAITALYTIAGGLAAVI) traverse the membrane as a helical segment. Residues 202–208 (YTDALQT) are Cytoplasmic-facing. The chain crosses the membrane as a helical span at residues 209–229 (LIMLIGALTLMGYSFAAVGGM). The Extracellular portion of the chain corresponds to 230 to 272 (EGLKEKYFLALASNRSGNSSCGLPREDAFHIFRDPLTSDLPWP). A helical transmembrane segment spans residues 273 to 293 (GILFGMSIPSLWYWCTDQVIV). The Cytoplasmic segment spans residues 294-308 (QRTLAAKNLSHAKGG). A helical transmembrane segment spans residues 309–329 (SLMAAYLKVLPLFIMVFPGMV). Residues 330 to 374 (SRVLFPDQVACADPEICQKVCSNPAGCSDIAYPKLVLELLPMGLR) lie on the Extracellular side of the membrane. Residues 375 to 397 (GLMMAVMVAALMSSLTSIFNSAS) traverse the membrane as a helical segment. Topologically, residues 398–418 (TIFTMDLWNHLRPRASERELM) are cytoplasmic. The chain crosses the membrane as a helical span at residues 419–439 (IVGRVFVLLLVLVSILWIPVV). At 440-446 (QASQGGQ) the chain is on the extracellular side. The chain crosses the membrane as a helical span at residues 447-467 (LFIYIQSISSYLQPPVAVVFI). Topologically, residues 468-479 (MGCFWKRTNEKG) are cytoplasmic. Residues 480-500 (AFSGLILGLLLGLVRLVLDFI) form a helical membrane-spanning segment. Residues 501–518 (YPQPRCDQPDERPAVVRD) are Extracellular-facing. The chain crosses the membrane as a helical span at residues 519–539 (VHYLYFSMILSSVTLVTVSTV). Topologically, residues 540 to 653 (SWCTAPPTQE…SLEEIPLVKT (114 aa)) are cytoplasmic. The chain crosses the membrane as a helical span at residues 654–674 (LLDINLIVCISCAIFLWGYFA).

The protein belongs to the sodium:solute symporter (SSF) (TC 2.A.21) family.

It localises to the membrane. Its subcellular location is the apical cell membrane. The enzyme catalyses myo-inositol(out) + 2 Na(+)(out) = myo-inositol(in) + 2 Na(+)(in). It carries out the reaction 1D-chiro-inositol(out) + 2 Na(+)(out) = 1D-chiro-inositol(in) + 2 Na(+)(in). It catalyses the reaction D-glucose(out) + 2 Na(+)(out) = D-glucose(in) + 2 Na(+)(in). The catalysed reaction is D-xylose(out) + 2 Na(+)(out) = D-xylose(in) + 2 Na(+)(in). With respect to regulation, MI transport activity inhibited by D-chiro-inositol (DCI), phlorizin (Pz) and sodium (Na(+)). Insulin increases D-chiro-inositol uptake. In terms of biological role, involved in the sodium-dependent cotransport of myo-inositol (MI) with a Na(+):MI stoichiometry of 2:1. Exclusively responsible for apical MI transport and absorption in intestine. Can also transport D-chiro-inositol (DCI) but not L-fucose. Exhibits stereospecific cotransport of both D-glucose and D-xylose. May induce apoptosis through the TNF-alpha, PDCD1 pathway. May play a role in the regulation of MI concentration in serum, involving reabsorption in at least the proximal tubule of the kidney. The protein is Sodium/myo-inositol cotransporter 2 of Sus scrofa (Pig).